The sequence spans 242 residues: N-glycosylase/DNA lyase (242 aa).

The 8-oxoguanine site is built by Gln26, Ser53, and Trp64. Residues 120–184 form a helix-hairpin-helix region; it reads EGYYKNMKML…EDLRIKSVTS (65 aa). The Schiff-base intermediate with DNA role is filled by Lys144. 8-oxoguanine is bound by residues Phe148 and Pro174. Asp176 is an active-site residue. 8-oxoguanine-binding residues include Asp210 and Trp214.

It belongs to the archaeal N-glycosylase/DNA lyase (AGOG) family.

It carries out the reaction 2'-deoxyribonucleotide-(2'-deoxyribose 5'-phosphate)-2'-deoxyribonucleotide-DNA = a 3'-end 2'-deoxyribonucleotide-(2,3-dehydro-2,3-deoxyribose 5'-phosphate)-DNA + a 5'-end 5'-phospho-2'-deoxyribonucleoside-DNA + H(+). DNA repair enzyme that is part of the base excision repair (BER) pathway; protects from oxidative damage by removing the major product of DNA oxidation, 8-oxoguanine (GO), from single- and double-stranded DNA substrates. The sequence is that of N-glycosylase/DNA lyase from Pyrococcus furiosus (strain ATCC 43587 / DSM 3638 / JCM 8422 / Vc1).